Reading from the N-terminus, the 219-residue chain is Histone H1.11R (219 aa).

2 stretches are compositionally biased toward low complexity: residues 1–20 (MAET…AAKA) and 28–40 (AAGG…PAGP). 2 disordered regions span residues 1-42 (MAET…GPSV) and 89-219 (LVSK…AKKK). Residues 38-111 (AGPSVTELIT…GASGSFRLSK (74 aa)) form the H15 domain. Basic residues-rich tracts occupy residues 121 to 135 (PKKK…KAAA), 143 to 160 (KKPK…KAKK), 168 to 183 (KSVK…KKAV), and 192 to 219 (KAVK…AKKK).

This sequence belongs to the histone H1/H5 family.

It localises to the nucleus. The protein resides in the chromosome. In terms of biological role, histones H1 are necessary for the condensation of nucleosome chains into higher-order structures. This Gallus gallus (Chicken) protein is Histone H1.11R.